The following is a 1411-amino-acid chain: DNA-directed RNA polymerase subunit beta' (1411 aa).

4 residues coordinate Zn(2+): cysteine 70, cysteine 72, cysteine 85, and cysteine 88. Residues aspartate 458, aspartate 460, and aspartate 462 each coordinate Mg(2+). Positions 813, 887, 894, and 897 each coordinate Zn(2+). The tract at residues 1391–1411 is disordered; it reads AQAEVPELDGSSVTASDAAAD.

It belongs to the RNA polymerase beta' chain family. The RNAP catalytic core consists of 2 alpha, 1 beta, 1 beta' and 1 omega subunit. When a sigma factor is associated with the core the holoenzyme is formed, which can initiate transcription. Mg(2+) is required as a cofactor. It depends on Zn(2+) as a cofactor.

The catalysed reaction is RNA(n) + a ribonucleoside 5'-triphosphate = RNA(n+1) + diphosphate. In terms of biological role, DNA-dependent RNA polymerase catalyzes the transcription of DNA into RNA using the four ribonucleoside triphosphates as substrates. This is DNA-directed RNA polymerase subunit beta' from Verminephrobacter eiseniae (strain EF01-2).